The sequence spans 426 residues: MKLQKPKGTQDILPEDAAKWQYVESVARDTFSQYNYGEIRTPMFEHYEVISRSVGDTTDIVTKEMYDFYDKGDRHITLRPEGTAPVVRSYVENKLFAPEVQKPVKLYYIGSMFRYERPQAGRLREFHQIGVECFGAANPATDVETIAMAYHLFEKLGIKDVTLHLNSLGSPESRSAYRQTLIDYLTPMRDQLSKDSQRRLDENPLRVLDSKEKEDKLAVEKAPSILDYLDEESQAHFEAVKDMLEALDIPYVIDTNMVRGLDYYNHTIFEFITSVEGSDLTICAGGRYDSLVGYFGGPETPGFGFGLGLERLLMIIEKQGITLPIETEMDVYLAVLGDSANSKALELVQAIRRQGFTAERDYLGRKIKAQFKSADTFKAKLVMTLGESEVEAGKAVIKNNRSRQEVEVSFEDMMTNFANISEQLLS.

The protein belongs to the class-II aminoacyl-tRNA synthetase family. In terms of assembly, homodimer.

It is found in the cytoplasm. It catalyses the reaction tRNA(His) + L-histidine + ATP = L-histidyl-tRNA(His) + AMP + diphosphate + H(+). This chain is Histidine--tRNA ligase, found in Streptococcus pyogenes serotype M28 (strain MGAS6180).